The sequence spans 87 residues: Small ribosomal subunit protein bS20 (87 aa).

Residues 1 to 22 (MAHHKSALKRIKQNKRKQFRNK) are disordered.

It belongs to the bacterial ribosomal protein bS20 family.

Functionally, binds directly to 16S ribosomal RNA. The chain is Small ribosomal subunit protein bS20 from Geobacter metallireducens (strain ATCC 53774 / DSM 7210 / GS-15).